The chain runs to 45 residues: Host translation inhibitor E66L (45 aa).

Belongs to the asfivirus E66L family.

The protein localises to the host endoplasmic reticulum. Its function is as follows. Inhibits host protein translation, probably through the EIF2AK2/EIF2S1 signaling pathway. Promotes cell retention in the G0/G1 phase. The sequence is that of Host translation inhibitor E66L from Ornithodoros (relapsing fever ticks).